The sequence spans 88 residues: Potassium channel toxin MeuTXKbeta3-meucin-24 (88 aa).

The first 22 residues, 1 to 22, serve as a signal peptide directing secretion; the sequence is MMKQQFFLFLAVIVMISSVIEA. A BetaSPN-type CS-alpha/beta domain is found at 55–88; sequence EYACPVIEKWCEDHCQAKNAIGRCENTECKCLSK. 3 cysteine pairs are disulfide-bonded: Cys-58–Cys-78, Cys-65–Cys-83, and Cys-69–Cys-85.

Belongs to the long chain scorpion toxin family. Class 2 subfamily. As to expression, expressed by the venom gland.

The protein localises to the secreted. Inhibits voltage-gated potassium channels. In terms of biological role, the synthetic meucin-24 inhibits the development of P.berghei ookinetes, kills intraerythrocytic P.falciparum, and is cytotoxic to the Drosophila S2 cells at micromolar concentrations. No antibacterial, antifungal and hemolytic activities have been found at micromolar concentrations. This Mesobuthus eupeus (Lesser Asian scorpion) protein is Potassium channel toxin MeuTXKbeta3-meucin-24.